The following is a 312-amino-acid chain: 3-methyl-2-oxobutanoate hydroxymethyltransferase (312 aa).

It belongs to the PanB family.

The enzyme catalyses 3-methyl-2-oxobutanoate + (6R)-5,10-methylene-5,6,7,8-tetrahydrofolate + H2O = 2-dehydropantoate + (6S)-5,6,7,8-tetrahydrofolate. It functions in the pathway cofactor biosynthesis; (R)-pantothenate biosynthesis; (R)-pantoate from 3-methyl-2-oxobutanoate: step 1/2. Probable 3-methyl-2-oxobutanoate hydroxymethyltransferase required for pantothenic acid biosynthesis. Acts downstream in the pantothenic acid pathway. The chain is 3-methyl-2-oxobutanoate hydroxymethyltransferase from Saccharomyces cerevisiae (strain ATCC 204508 / S288c) (Baker's yeast).